Consider the following 265-residue polypeptide: Elongation factor 1-delta (265 aa).

Over residues 31-54 (MGSASNKPHNSPQSAASALSNSGD) the composition is skewed to polar residues. 2 disordered regions span residues 31 to 64 (MGSA…RVAN) and 118 to 155 (KVQV…DAEA). The segment covering 130–153 (GTGEDDDDDDDIDLFGSDNEEEDA) has biased composition (acidic residues).

It belongs to the EF-1-beta/EF-1-delta family. In terms of assembly, EF-1 is composed of 4 subunits: alpha, beta, delta, and gamma.

Functionally, EF-1-beta and EF-1-delta stimulate the exchange of GDP bound to EF-1-alpha to GTP. The protein is Elongation factor 1-delta (eef1d) of Xenopus laevis (African clawed frog).